A 78-amino-acid polypeptide reads, in one-letter code: Acyl carrier protein (78 aa).

The region spanning 2–77 (SDTADRVQKI…DATKYIEEHK (76 aa)) is the Carrier domain. At S37 the chain carries O-(pantetheine 4'-phosphoryl)serine.

It belongs to the acyl carrier protein (ACP) family. Post-translationally, 4'-phosphopantetheine is transferred from CoA to a specific serine of apo-ACP by AcpS. This modification is essential for activity because fatty acids are bound in thioester linkage to the sulfhydryl of the prosthetic group.

It is found in the cytoplasm. It functions in the pathway lipid metabolism; fatty acid biosynthesis. Functionally, carrier of the growing fatty acid chain in fatty acid biosynthesis. The polypeptide is Acyl carrier protein (Erythrobacter litoralis (strain HTCC2594)).